The sequence spans 106 residues: Iron-sulfur cluster assembly protein CyaY (106 aa).

The protein belongs to the frataxin family.

Its function is as follows. Involved in iron-sulfur (Fe-S) cluster assembly. May act as a regulator of Fe-S biogenesis. The protein is Iron-sulfur cluster assembly protein CyaY of Escherichia coli O6:H1 (strain CFT073 / ATCC 700928 / UPEC).